A 380-amino-acid polypeptide reads, in one-letter code: Actin-like protein (380 aa).

The protein belongs to the actin family. ARP1 subfamily.

Its subcellular location is the cytoplasm. The protein resides in the cytoskeleton. Its function is as follows. Involved in nuclear migration. May function as a component of the dynactin complex which activates force generation by cytoplasmic dynein. The protein is Actin-like protein (ro-4) of Neurospora crassa (strain ATCC 24698 / 74-OR23-1A / CBS 708.71 / DSM 1257 / FGSC 987).